A 148-amino-acid chain; its full sequence is NPC intracellular cholesterol transporter 2 homolog a (148 aa).

An N-terminal signal peptide occupies residues methionine 1–alanine 16. 3 cysteine pairs are disulfide-bonded: cysteine 24–cysteine 140, cysteine 39–cysteine 46, and cysteine 92–cysteine 99. N-linked (GlcNAc...) asparagine glycosylation occurs at asparagine 51.

It belongs to the NPC2 family. As to expression, broadly expressed with a higher level of expression in many tissues, including midgut, salivary gland and ventral nerve cord.

It is found in the secreted. Its function is as follows. Functions redundantly with Npc2b in regulating sterol homeostasis and ecdysteroid biosynthesis, probably by controlling the availability of sterol substrate. The protein is NPC intracellular cholesterol transporter 2 homolog a of Drosophila melanogaster (Fruit fly).